Here is a 92-residue protein sequence, read N- to C-terminus: DNA-directed RNA polymerase subunit Rpo11 (92 aa).

It belongs to the archaeal Rpo11/eukaryotic RPB11/RPC19 RNA polymerase subunit family. In terms of assembly, part of the 13-subunit RNA polymerase complex.

Its subcellular location is the cytoplasm. It catalyses the reaction RNA(n) + a ribonucleoside 5'-triphosphate = RNA(n+1) + diphosphate. Functionally, DNA-dependent RNA polymerase (RNAP) catalyzes the transcription of DNA into RNA using the four ribonucleoside triphosphates as substrates. The protein is DNA-directed RNA polymerase subunit Rpo11 of Saccharolobus solfataricus (strain ATCC 35092 / DSM 1617 / JCM 11322 / P2) (Sulfolobus solfataricus).